Here is a 381-residue protein sequence, read N- to C-terminus: N-acetyl-alpha-D-glucosaminyl L-malate synthase (381 aa).

3 residues coordinate (S)-malate: Ser-16, Tyr-94, and Thr-122. Positions 206, 262, and 290 each coordinate UDP.

The protein belongs to the glycosyltransferase group 1 family. Glycosyltransferase 4 subfamily. In terms of assembly, dimer of tetramers.

The enzyme catalyses (S)-malate + UDP-N-acetyl-alpha-D-glucosamine = (S)-malyl N-acetyl-alpha-D-glucosaminide + UDP + H(+). Functionally, involved in bacillithiol (BSH) biosynthesis. Catalyzes the first step of the pathway, the formation of N-acetylglucosaminylmalate (GlcNAc-Mal) from UDP-N-acetylglucosamine (UDP-GlcNAc) and L-malate. This is N-acetyl-alpha-D-glucosaminyl L-malate synthase from Bacillus anthracis.